Consider the following 280-residue polypeptide: Orotidine 5'-phosphate decarboxylase (280 aa).

Substrate contacts are provided by residues D40, 62-64 (KTH), 93-102 (DRKFVDIGNT), Y228, and R246. The Proton donor role is filled by K95.

This sequence belongs to the OMP decarboxylase family.

The catalysed reaction is orotidine 5'-phosphate + H(+) = UMP + CO2. It functions in the pathway pyrimidine metabolism; UMP biosynthesis via de novo pathway; UMP from orotate: step 2/2. This chain is Orotidine 5'-phosphate decarboxylase (PYRG), found in Solorina crocea.